The following is a 210-amino-acid chain: N-(5'-phosphoribosyl)anthranilate isomerase (210 aa).

This sequence belongs to the TrpF family.

It catalyses the reaction N-(5-phospho-beta-D-ribosyl)anthranilate = 1-(2-carboxyphenylamino)-1-deoxy-D-ribulose 5-phosphate. The protein operates within amino-acid biosynthesis; L-tryptophan biosynthesis; L-tryptophan from chorismate: step 3/5. The sequence is that of N-(5'-phosphoribosyl)anthranilate isomerase from Trichormus variabilis (strain ATCC 29413 / PCC 7937) (Anabaena variabilis).